Reading from the N-terminus, the 247-residue chain is Mitochondrial inner membrane protease ATP23 (247 aa).

The segment at 1-21 (MSVPPPPKEDLIKPNPPKSES) is disordered. Residue histidine 144 coordinates a divalent metal cation. Residue glutamate 145 is part of the active site. Histidine 148 serves as a coordination point for a divalent metal cation.

It belongs to the peptidase M76 family.

It localises to the mitochondrion inner membrane. Functionally, has a dual role in the assembly of mitochondrial ATPase. Acts as a protease that removes N-terminal residues of mitochondrial ATPase CF(0) subunit 6 at the intermembrane space side. Also involved in the correct assembly of the membrane-embedded ATPase CF(0) particle, probably mediating association of subunit 6 with the subunit 9 ring. The sequence is that of Mitochondrial inner membrane protease ATP23 (ATP23) from Kluyveromyces lactis (strain ATCC 8585 / CBS 2359 / DSM 70799 / NBRC 1267 / NRRL Y-1140 / WM37) (Yeast).